We begin with the raw amino-acid sequence, 192 residues long: Cytidylate kinase (192 aa).

7-15 (GPAGSGKST) is a binding site for ATP.

It belongs to the cytidylate kinase family. Type 2 subfamily.

Its subcellular location is the cytoplasm. The catalysed reaction is CMP + ATP = CDP + ADP. It catalyses the reaction dCMP + ATP = dCDP + ADP. The polypeptide is Cytidylate kinase (Haloarcula marismortui (strain ATCC 43049 / DSM 3752 / JCM 8966 / VKM B-1809) (Halobacterium marismortui)).